A 292-amino-acid chain; its full sequence is Protein sarah (292 aa).

Residues 1–51 show a composition bias toward low complexity; that stretch reads MSDAAKSNNNASADAPDPTTPDATGEADAANAATPTTPRGNHNNNNSANGR. The interval 1-111 is disordered; sequence MSDAAKSNNN…TEPEVDADSF (111 aa). Phosphoserine occurs at positions 67, 72, and 100. Over residues 98–111 the composition is skewed to acidic residues; the sequence is VDSDTEPEVDADSF. Phosphothreonine is present on residues Thr-102 and Thr-196. 2 positions are modified to phosphoserine: Ser-215 and Ser-219. Thr-246 bears the Phosphothreonine mark.

It belongs to the RCAN family. Interacts with Pp2B-14D, CanA-14F and CanB2. Phosphorylation at Ser-215 and Ser-219 is essential for calcineurin activation and completion of female meiosis. Sgg is required for phosphorylation of Ser-215 in activated eggs. Ser-100, Thr-102 and Ser-219 are highly phosphorylated in both ovaries and activated eggs; however, phosphorylation at Ser-100 or Thr-102 is not required for sra function in completion of female meiosis. As to expression, expressed in central nervous system of the third instar larvae, with a relatively intense signal in the brain and weak signals in the ventral ganglion. Relatively low, but ubiquitous expression level is observed in leg and wing imaginal disks, no signal is detected in the eye-antennal disks. Expressed in all neurons in the adult brain.

Required for elongation of meiosis I spindle. Critical for ovulation, meiotic progression in oocytes and female courtship behavior, including their postmating changes. Regulates female meiosis by controlling calcineurin activity in the germline. Has a role in calcium signaling during egg activation; bcd mRNA polyadenylation and translation in the oocyte. This is Protein sarah (sra) from Drosophila melanogaster (Fruit fly).